The primary structure comprises 245 residues: Phycocyanobilin:ferredoxin oxidoreductase (245 aa).

The protein belongs to the HY2 family.

The catalysed reaction is (2R,3Z)-phycocyanobilin + 4 oxidized [2Fe-2S]-[ferredoxin] = biliverdin IXalpha + 4 reduced [2Fe-2S]-[ferredoxin] + 4 H(+). In terms of biological role, catalyzes the four-electron reduction of biliverdin IX-alpha (2-electron reduction at both the A and D rings); the reaction proceeds via an isolatable 2-electron intermediate, 181,182-dihydrobiliverdin. The protein is Phycocyanobilin:ferredoxin oxidoreductase of Trichodesmium erythraeum (strain IMS101).